The primary structure comprises 427 residues: Probable glucuronosyltransferase Os03g0107900 (427 aa).

The Cytoplasmic segment spans residues 1–33 (MAMRGDPKQRRASASAPHGGAAHHVADKLRRHS). The chain crosses the membrane as a helical; Signal-anchor for type II membrane protein span at residues 34–54 (TFLLLLLLLWFALSLYLFLSA). The Lumenal segment spans residues 55 to 427 (TPPPPRPAFL…QRRHVESWKR (373 aa)). 4 N-linked (GlcNAc...) asparagine glycosylation sites follow: asparagine 136, asparagine 168, asparagine 264, and asparagine 374.

This sequence belongs to the glycosyltransferase 47 family.

The protein localises to the golgi apparatus membrane. Involved in the synthesis of glucuronoxylan hemicellulose in secondary cell walls. The polypeptide is Probable glucuronosyltransferase Os03g0107900 (Oryza sativa subsp. japonica (Rice)).